The sequence spans 224 residues: UPF0758 protein VV1_0825 (224 aa).

The tract at residues 1–20 is disordered; it reads MSLKNLPSESMPREKLLQRG. The 123-residue stretch at 102 to 224 folds into the MPN domain; that stretch reads ALTSPQHTKL…VVSFAERGWI (123 aa). Residues histidine 173, histidine 175, and aspartate 186 each contribute to the Zn(2+) site. The short motif at 173-186 is the JAMM motif element; sequence HNHPSGVAEPSQAD.

It belongs to the UPF0758 family.

The chain is UPF0758 protein VV1_0825 from Vibrio vulnificus (strain CMCP6).